Here is a 487-residue protein sequence, read N- to C-terminus: Betaine aldehyde dehydrogenase (487 aa).

K(+) contacts are provided by S26 and D93. 150-152 (GAW) serves as a coordination point for NAD(+). K162 (charge relay system) is an active-site residue. Residues 176 to 179 (KPSE) and 229 to 232 (SVPT) each bind NAD(+). L244 lines the K(+) pocket. E250 functions as the Proton acceptor in the catalytic mechanism. NAD(+)-binding residues include G252, C284, and E384. C284 acts as the Nucleophile in catalysis. C284 bears the Cysteine sulfenic acid (-SOH) mark. K(+) is bound by residues K454 and G457. E461 (charge relay system) is an active-site residue.

It belongs to the aldehyde dehydrogenase family. As to quaternary structure, dimer of dimers. Requires K(+) as cofactor.

The catalysed reaction is betaine aldehyde + NAD(+) + H2O = glycine betaine + NADH + 2 H(+). Its pathway is amine and polyamine biosynthesis; betaine biosynthesis via choline pathway; betaine from betaine aldehyde: step 1/1. Involved in the biosynthesis of the osmoprotectant glycine betaine. Catalyzes the irreversible oxidation of betaine aldehyde to the corresponding acid. The sequence is that of Betaine aldehyde dehydrogenase from Rhizobium etli (strain CIAT 652).